Consider the following 137-residue polypeptide: Large ribosomal subunit protein uL16 (137 aa).

The protein belongs to the universal ribosomal protein uL16 family. Part of the 50S ribosomal subunit.

Functionally, binds 23S rRNA and is also seen to make contacts with the A and possibly P site tRNAs. This chain is Large ribosomal subunit protein uL16, found in Rhodopseudomonas palustris (strain HaA2).